The sequence spans 408 residues: Phosphoglycerate kinase (408 aa).

Residues D22–N24, R39, H60–R63, R117, and R157 each bind substrate. ATP-binding positions include E332 and G358 to T361.

It belongs to the phosphoglycerate kinase family. In terms of assembly, monomer.

It is found in the cytoplasm. It catalyses the reaction (2R)-3-phosphoglycerate + ATP = (2R)-3-phospho-glyceroyl phosphate + ADP. Its pathway is carbohydrate degradation; glycolysis; pyruvate from D-glyceraldehyde 3-phosphate: step 2/5. In Thermoplasma volcanium (strain ATCC 51530 / DSM 4299 / JCM 9571 / NBRC 15438 / GSS1), this protein is Phosphoglycerate kinase.